The chain runs to 551 residues: Steroid transmembrane transporter SLC22A24 (551 aa).

12 helical membrane passes run 16–36 (FQIL…PHTV), 146–166 (SVAK…GGHL), 174–194 (FIVT…AFAP), 204–222 (FLTG…LLIL), 235–255 (ALIF…AFGI), 260–280 (HLQL…RWLS), 350–370 (ICLL…LLIN), 378–398 (VFLL…LGNF), 410–430 (IIFM…TQEM), 435–455 (LVLA…TAVL), 469–489 (LGVI…LMIL), and 496–516 (LPWI…LLLP). The disordered stretch occupies residues 524–551 (PDSIQDVENKRKSSREVKKDAVAKVTPF). The segment covering 530–545 (VENKRKSSREVKKDAV) has biased composition (basic and acidic residues).

Localized to the kidney. Mainly expressed in the late segments of proximal tubules.

The protein resides in the cell membrane. It catalyses the reaction estrone 3-sulfate(out) + glutarate(in) = estrone 3-sulfate(in) + glutarate(out). It carries out the reaction 17beta-estradiol 17-O-(beta-D-glucuronate)(out) + glutarate(in) = 17beta-estradiol 17-O-(beta-D-glucuronate)(in) + glutarate(out). The enzyme catalyses dehydroepiandrosterone 3-sulfate(out) + glutarate(in) = dehydroepiandrosterone 3-sulfate(in) + glutarate(out). Renal transmembrane organic anion/dicarboxylate exchanger that participates in the reabsorption of conjugated steroids, as well as bile acids, driven by an outward gradient of dicarboxylates such as glutarate or succinate. Transports estrone 3-sulfate and estradiol-17-glucuronide (17beta-estradiol 17-O-(beta-D-glucuronate)), but not androstanediol glucuronide (5alpha-androstane-3alpha,17beta-diol 3-O-(beta-D-glucuronate)), nor taurocholate. Prefers sulfate conjugates of steroids rather than glucuronide conjugates. The polypeptide is Steroid transmembrane transporter SLC22A24 (Rattus norvegicus (Rat)).